Here is a 285-residue protein sequence, read N- to C-terminus: Bifunctional protein FolD (285 aa).

NADP(+)-binding positions include 165 to 167, Ser-190, and Ile-231; that span reads GRS.

The protein belongs to the tetrahydrofolate dehydrogenase/cyclohydrolase family. In terms of assembly, homodimer.

It carries out the reaction (6R)-5,10-methylene-5,6,7,8-tetrahydrofolate + NADP(+) = (6R)-5,10-methenyltetrahydrofolate + NADPH. The catalysed reaction is (6R)-5,10-methenyltetrahydrofolate + H2O = (6R)-10-formyltetrahydrofolate + H(+). Its pathway is one-carbon metabolism; tetrahydrofolate interconversion. Functionally, catalyzes the oxidation of 5,10-methylenetetrahydrofolate to 5,10-methenyltetrahydrofolate and then the hydrolysis of 5,10-methenyltetrahydrofolate to 10-formyltetrahydrofolate. The polypeptide is Bifunctional protein FolD (Acetivibrio thermocellus (strain ATCC 27405 / DSM 1237 / JCM 9322 / NBRC 103400 / NCIMB 10682 / NRRL B-4536 / VPI 7372) (Clostridium thermocellum)).